The chain runs to 838 residues: Urease (838 aa).

Residues Gly402–Tyr838 enclose the Urease domain. Ni(2+)-binding residues include His407, His409, and Lys490. Residue Lys490 is modified to N6-carboxylysine. Residue His492 coordinates substrate. Ni(2+)-binding residues include His519 and His545. His593 functions as the Proton donor in the catalytic mechanism. Residue Asp633 participates in Ni(2+) binding.

The protein in the C-terminal section; belongs to the metallo-dependent hydrolases superfamily. Urease alpha subunit family. As to quaternary structure, homohexamer. It depends on Ni cation as a cofactor. Post-translationally, carboxylation allows a single lysine to coordinate two nickel ions.

The catalysed reaction is urea + 2 H2O + H(+) = hydrogencarbonate + 2 NH4(+). It functions in the pathway nitrogen metabolism; urea degradation; CO(2) and NH(3) from urea (urease route): step 1/1. This Aspergillus fumigatus (strain ATCC MYA-4609 / CBS 101355 / FGSC A1100 / Af293) (Neosartorya fumigata) protein is Urease (ure1).